The following is a 370-amino-acid chain: Cytochrome b (370 aa).

A run of 4 helical transmembrane segments spans residues 25–45 (FGSMLLTCLLLQIMTGFFLAI), 69–90 (WIMQNIHAIGASLFFICIYIHI), 105–125 (WLSGTALLITLMATAFFGYVL), and 170–190 (FFALHFILPFAIISLSSIHII). 2 residues coordinate heme b: H75 and H89. The heme b site is built by H174 and H188. A ubiquinone is bound at residue H193. 4 helical membrane-spanning segments follow: residues 218-238 (YKDMLMITIMITMLFITMSFT), 280-300 (LGGTMALIMSVAILITVPFTH), 312-332 (LTQILFWTLISTFIIITWTAT), and 339-358 (FISISQMTSIIYFSFFIINP).

Belongs to the cytochrome b family. As to quaternary structure, the cytochrome bc1 complex contains 3 respiratory subunits (MT-CYB, CYC1 and UQCRFS1), 2 core proteins (UQCRC1 and UQCRC2) and probably 6 low-molecular weight proteins. Heme b is required as a cofactor.

The protein localises to the mitochondrion inner membrane. In terms of biological role, component of the ubiquinol-cytochrome c reductase complex (complex III or cytochrome b-c1 complex) that is part of the mitochondrial respiratory chain. The b-c1 complex mediates electron transfer from ubiquinol to cytochrome c. Contributes to the generation of a proton gradient across the mitochondrial membrane that is then used for ATP synthesis. This chain is Cytochrome b (MT-CYB), found in Bungarus fasciatus (Banded krait).